A 378-amino-acid polypeptide reads, in one-letter code: Phosphoserine aminotransferase (378 aa).

Arg53 contacts L-glutamate. Pyridoxal 5'-phosphate is bound by residues Trp117, Thr167, Asp190, and Gln213. An N6-(pyridoxal phosphate)lysine modification is found at Lys214. Asn255–Thr256 lines the pyridoxal 5'-phosphate pocket.

The protein belongs to the class-V pyridoxal-phosphate-dependent aminotransferase family. SerC subfamily. As to quaternary structure, homodimer. Pyridoxal 5'-phosphate serves as cofactor.

The protein localises to the cytoplasm. It carries out the reaction O-phospho-L-serine + 2-oxoglutarate = 3-phosphooxypyruvate + L-glutamate. The catalysed reaction is 4-(phosphooxy)-L-threonine + 2-oxoglutarate = (R)-3-hydroxy-2-oxo-4-phosphooxybutanoate + L-glutamate. It functions in the pathway amino-acid biosynthesis; L-serine biosynthesis; L-serine from 3-phospho-D-glycerate: step 2/3. The protein operates within cofactor biosynthesis; pyridoxine 5'-phosphate biosynthesis; pyridoxine 5'-phosphate from D-erythrose 4-phosphate: step 3/5. Its function is as follows. Catalyzes the reversible conversion of 3-phosphohydroxypyruvate to phosphoserine and of 3-hydroxy-2-oxo-4-phosphonooxybutanoate to phosphohydroxythreonine. This chain is Phosphoserine aminotransferase, found in Ralstonia pickettii (strain 12J).